The following is a 469-amino-acid chain: Interstitial collagenase (469 aa).

The signal sequence occupies residues 1 to 18; sequence MLSLPLLLLLLWGMGSHS. A propeptide spans 19–99 (activation peptide); sequence FPTVPSETRE…PRCGVPDVAE (81 aa). The Cysteine switch motif lies at 90 to 97; sequence PRCGVPDV. Cysteine 92 provides a ligand contact to Zn(2+). Positions 124 and 158 each coordinate Ca(2+). Zn(2+) is bound by residues histidine 168 and aspartate 170. Residues aspartate 175, glycine 176, glycine 178, and asparagine 180 each coordinate Ca(2+). Position 183 (histidine 183) interacts with Zn(2+). Arginine 190, glycine 192, and aspartate 194 together coordinate Ca(2+). Histidine 196 serves as a coordination point for Zn(2+). Positions 198, 199, and 201 each coordinate Ca(2+). Histidine 218 contributes to the Zn(2+) binding site. Glutamate 219 is an active-site residue. Residues histidine 222 and histidine 228 each coordinate Zn(2+). Threonine 274 is modified (phosphothreonine). Hemopexin repeat units lie at residues 275 to 324, 325 to 371, 374 to 422, and 423 to 466; these read PEVC…WPQL, PNGL…FGFP, VKNI…FPGI, and GDKV…WFNC. A disulfide bond links cysteine 278 and cysteine 466. Ca(2+) is bound by residues aspartate 285 and glutamine 329. Tyrosine 360 is subject to Phosphotyrosine; by PKDCC. Ca(2+) contacts are provided by aspartate 378 and aspartate 427.

This sequence belongs to the peptidase M10A family. Ca(2+) is required as a cofactor. It depends on Zn(2+) as a cofactor. In terms of processing, tyrosine phosphorylated in platelets by PKDCC/VLK.

The protein localises to the secreted. The protein resides in the extracellular space. It localises to the extracellular matrix. The catalysed reaction is Cleavage of the triple helix of collagen at about three-quarters of the length of the molecule from the N-terminus, at 775-Gly-|-Ile-776 in the alpha1(I) chain. Cleaves synthetic substrates and alpha-macroglobulins at bonds where P1' is a hydrophobic residue.. Can be activated without removal of the activation peptide. Its function is as follows. Cleaves collagens of types I, II, and III at one site in the helical domain. Also cleaves collagens of types VII and X. The chain is Interstitial collagenase (MMP1) from Equus caballus (Horse).